The primary structure comprises 251 residues: Octanoyltransferase (251 aa).

The BPL/LPL catalytic domain maps to 56–241 (ADTGDEIWVV…NLDGASAAAD (186 aa)). Residues 96-103 (RGGQITYH), 168-170 (ALG), and 181-183 (GLS) each bind substrate. Cysteine 199 serves as the catalytic Acyl-thioester intermediate.

It belongs to the LipB family.

It is found in the cytoplasm. The catalysed reaction is octanoyl-[ACP] + L-lysyl-[protein] = N(6)-octanoyl-L-lysyl-[protein] + holo-[ACP] + H(+). The protein operates within protein modification; protein lipoylation via endogenous pathway; protein N(6)-(lipoyl)lysine from octanoyl-[acyl-carrier-protein]: step 1/2. Functionally, catalyzes the transfer of endogenously produced octanoic acid from octanoyl-acyl-carrier-protein onto the lipoyl domains of lipoate-dependent enzymes. Lipoyl-ACP can also act as a substrate although octanoyl-ACP is likely to be the physiological substrate. The sequence is that of Octanoyltransferase from Burkholderia orbicola (strain AU 1054).